The sequence spans 244 residues: uncharacterized protein (244 aa).

The segment at 30–49 (RETNESPKSQNPSEEATTVN) is disordered. The segment covering 35–49 (SPKSQNPSEEATTVN) has biased composition (polar residues). 4 helical membrane passes run 96 to 116 (LWGT…LSNS), 128 to 148 (LLFI…FGLF), 171 to 191 (GFFI…TIAF), and 194 to 214 (FVTI…HPLS). The tract at residues 224–244 (QLDGSGERKTDSSLVHQNPPN) is disordered. The span at 235 to 244 (SSLVHQNPPN) shows a compositional bias: polar residues.

It is found in the nucleus membrane. This is an uncharacterized protein from Schizosaccharomyces pombe (strain 972 / ATCC 24843) (Fission yeast).